A 291-amino-acid polypeptide reads, in one-letter code: Membrane protein insertase YidC (291 aa).

The first 19 residues, 1 to 19 (MKKKALLPLLLGVMVFLAG), serve as a signal peptide directing secretion. Cys-20 carries N-palmitoyl cysteine lipidation. A lipid anchor (S-diacylglycerol cysteine) is attached at Cys-20. Transmembrane regions (helical) follow at residues 56 to 76 (YGIAIIVLVLVIRIILLPFML), 134 to 154 (ALGCLPVLIQMPVVMGLYFVL), 170 to 190 (WFNLIHPDIWITIIAGVLYFI), and 211 to 231 (MIVSPIMIIWISLSSASALGL). The tract at residues 266–291 (FKENNSNSNKKGKNTQVVSKNNKKKK) is disordered.

The protein belongs to the OXA1/ALB3/YidC family. Type 2 subfamily.

Its subcellular location is the cell membrane. Required for the insertion and/or proper folding and/or complex formation of integral membrane proteins into the membrane. Involved in integration of membrane proteins that insert both dependently and independently of the Sec translocase complex, as well as at least some lipoproteins. The sequence is that of Membrane protein insertase YidC from Staphylococcus haemolyticus (strain JCSC1435).